A 31-amino-acid polypeptide reads, in one-letter code: Photosystem II reaction center protein M (31 aa).

Residues 5–25 (ILAFIATALLILVPTAFLLII) traverse the membrane as a helical segment.

The protein belongs to the PsbM family. As to quaternary structure, PSII is composed of 1 copy each of membrane proteins PsbA, PsbB, PsbC, PsbD, PsbE, PsbF, PsbH, PsbI, PsbJ, PsbK, PsbL, PsbM, PsbT, PsbX, PsbY, PsbZ, Psb30/Ycf12, at least 3 peripheral proteins of the oxygen-evolving complex and a large number of cofactors. It forms dimeric complexes.

Its subcellular location is the plastid membrane. In terms of biological role, one of the components of the core complex of photosystem II (PSII). PSII is a light-driven water:plastoquinone oxidoreductase that uses light energy to abstract electrons from H(2)O, generating O(2) and a proton gradient subsequently used for ATP formation. It consists of a core antenna complex that captures photons, and an electron transfer chain that converts photonic excitation into a charge separation. This subunit is found at the monomer-monomer interface. The sequence is that of Photosystem II reaction center protein M from Cuscuta reflexa (Southern Asian dodder).